A 179-amino-acid chain; its full sequence is Large ribosomal subunit protein uL5 (179 aa).

It belongs to the universal ribosomal protein uL5 family. As to quaternary structure, part of the 50S ribosomal subunit; part of the 5S rRNA/L5/L18/L25 subcomplex. Contacts the 5S rRNA and the P site tRNA. Forms a bridge to the 30S subunit in the 70S ribosome.

Functionally, this is one of the proteins that bind and probably mediate the attachment of the 5S RNA into the large ribosomal subunit, where it forms part of the central protuberance. In the 70S ribosome it contacts protein S13 of the 30S subunit (bridge B1b), connecting the 2 subunits; this bridge is implicated in subunit movement. Contacts the P site tRNA; the 5S rRNA and some of its associated proteins might help stabilize positioning of ribosome-bound tRNAs. This chain is Large ribosomal subunit protein uL5, found in Neisseria gonorrhoeae (strain ATCC 700825 / FA 1090).